Consider the following 309-residue polypeptide: MMSFLHIVFSILVVVAFILGNFANGFIALINFIAWVKRQKISSADQIIAALAVSRVGLLWVILLHWYSTVLNPTSSNLKVIIFISNAWAVTNHFSIWLATSLSIFYLLKIVNFSRLIFHHLKRKAKSVVLVIVLGSLFFLVCHLVMKHTYINVWTEECEGNVTWKIKLRNAMHLSNLTVAMLANLIPFTLTLISFLLLIYSLCKHLKKMQLHGKGSQDPSTKIHIKALQTVTSFLILLAIYFLCLIISFWNFKMRPKEIVLMLCQAFGIIYPSFHSFILIWGNKTLKQTFLSVLWQVTCWAKGQNQSTP.

Over 1-6 the chain is Extracellular; sequence MMSFLH. The chain crosses the membrane as a helical span at residues 7-27; sequence IVFSILVVVAFILGNFANGFI. The Cytoplasmic portion of the chain corresponds to 28-46; it reads ALINFIAWVKRQKISSADQ. A helical membrane pass occupies residues 47–67; it reads IIAALAVSRVGLLWVILLHWY. Residues 68 to 79 lie on the Extracellular side of the membrane; that stretch reads STVLNPTSSNLK. Residues 80-100 traverse the membrane as a helical segment; sequence VIIFISNAWAVTNHFSIWLAT. The Cytoplasmic portion of the chain corresponds to 101 to 125; that stretch reads SLSIFYLLKIVNFSRLIFHHLKRKA. Residues 126–146 form a helical membrane-spanning segment; sequence KSVVLVIVLGSLFFLVCHLVM. The Extracellular portion of the chain corresponds to 147–178; that stretch reads KHTYINVWTEECEGNVTWKIKLRNAMHLSNLT. N-linked (GlcNAc...) asparagine glycosylation is found at Asn161 and Asn176. Residues 179–199 form a helical membrane-spanning segment; sequence VAMLANLIPFTLTLISFLLLI. Residues 200–229 are Cytoplasmic-facing; it reads YSLCKHLKKMQLHGKGSQDPSTKIHIKALQ. Residues 230 to 250 traverse the membrane as a helical segment; the sequence is TVTSFLILLAIYFLCLIISFW. Over 251-259 the chain is Extracellular; that stretch reads NFKMRPKEI. Residues 260–280 form a helical membrane-spanning segment; sequence VLMLCQAFGIIYPSFHSFILI. Residues 281–309 are Cytoplasmic-facing; sequence WGNKTLKQTFLSVLWQVTCWAKGQNQSTP.

This sequence belongs to the G-protein coupled receptor T2R family. Expressed in subsets of taste receptor cells of the tongue and exclusively in gustducin-positive cells.

It is found in the membrane. Receptor that may play a role in the perception of bitterness and is gustducin-linked. May play a role in sensing the chemical composition of the gastrointestinal content. The activity of this receptor may stimulate alpha gustducin, mediate PLC-beta-2 activation and lead to the gating of TRPM5. The polypeptide is Taste receptor type 2 member 20 (TAS2R20) (Homo sapiens (Human)).